The following is a 173-amino-acid chain: Thiol-disulfide oxidoreductase ResA (173 aa).

The chain crosses the membrane as a helical; Signal-anchor for type II membrane protein span at residues 10–29 (VIILLILSGAVGFTLYQGYF). One can recognise a Thioredoxin domain in the interval 35 to 173 (MEIGKEAPNF…LEEYLKKITP (139 aa)). Cysteines 73 and 76 form a disulfide.

Belongs to the thioredoxin family. ResA subfamily.

It is found in the cell membrane. The protein operates within protein modification; cytochrome c assembly. Its function is as follows. Thiol-disulfide oxidoreductase which is required in disulfide reduction during c-type cytochrome synthesis. May accept reducing equivalents from CcdA, leading to breakage of disulfide bonds in apocytochrome c; following this reduction heme can be covalently attached. The polypeptide is Thiol-disulfide oxidoreductase ResA (Bacillus cereus (strain ATCC 10987 / NRS 248)).